We begin with the raw amino-acid sequence, 364 residues long: Peroxisome biogenesis protein 3-2 (364 aa).

Residues 15–32 (VLVTAGCLGSGYLLYKLY) traverse the membrane as a helical segment. Positions 33-62 (NSHTRRLADLERELAHERENDEIIKTQMKA) form a coiled coil.

This sequence belongs to the peroxin-3 family.

The protein localises to the peroxisome membrane. Functionally, involved in morphology determination of peroxisomes, but not in import of peroxisomal matrix proteins. May act as a docking factor for PEX19 and be necessary for the import of peroxisomal membrane proteins in the peroxisomes. The polypeptide is Peroxisome biogenesis protein 3-2 (PEX3-2) (Arabidopsis thaliana (Mouse-ear cress)).